The sequence spans 388 residues: Probable acetyl-CoA acetyltransferase (388 aa).

Cys-84 (acyl-thioester intermediate) is an active-site residue. Lys-187 is covalently cross-linked (Isoglutamyl lysine isopeptide (Lys-Gln) (interchain with Q-Cter in protein Pup)). Residues His-345 and Cys-375 each act as proton acceptor in the active site.

Belongs to the thiolase-like superfamily. Thiolase family.

The catalysed reaction is 2 acetyl-CoA = acetoacetyl-CoA + CoA. The polypeptide is Probable acetyl-CoA acetyltransferase (Mycolicibacterium smegmatis (strain ATCC 700084 / mc(2)155) (Mycobacterium smegmatis)).